Here is a 499-residue protein sequence, read N- to C-terminus: Probable cytosol aminopeptidase (499 aa).

Residues Lys-263 and Asp-268 each coordinate Mn(2+). Lys-275 is a catalytic residue. Mn(2+)-binding residues include Asp-286, Asp-345, and Glu-347. Residue Arg-349 is part of the active site.

Belongs to the peptidase M17 family. Mn(2+) is required as a cofactor.

The protein localises to the cytoplasm. It catalyses the reaction Release of an N-terminal amino acid, Xaa-|-Yaa-, in which Xaa is preferably Leu, but may be other amino acids including Pro although not Arg or Lys, and Yaa may be Pro. Amino acid amides and methyl esters are also readily hydrolyzed, but rates on arylamides are exceedingly low.. It carries out the reaction Release of an N-terminal amino acid, preferentially leucine, but not glutamic or aspartic acids.. In terms of biological role, presumably involved in the processing and regular turnover of intracellular proteins. Catalyzes the removal of unsubstituted N-terminal amino acids from various peptides. In Chlamydia trachomatis serovar L2 (strain ATCC VR-902B / DSM 19102 / 434/Bu), this protein is Probable cytosol aminopeptidase.